The sequence spans 494 residues: Tripartite motif-containing protein 5 (494 aa).

A2 is modified (N-acetylalanine). Residues C15–R59 form an RING-type zinc finger. S86 is modified (phosphoserine). The B box-type zinc finger occupies Q91–V132. C96, H99, C118, and H124 together coordinate Zn(2+). Positions L131–V223 form a coiled coil. The tract at residues F186–K199 is required for interaction with GABARAP and for autophagy. The B30.2/SPRY domain maps to P280–S494.

It belongs to the TRIM/RBCC family. As to quaternary structure, can form homodimers and homotrimers. In addition to lower-order dimerization, also exhibits a higher-order multimerization and both low- and high-order multimerizations are essential for its restriction activity. Interacts with BTBD1 and BTBD2. Interacts with PSMC4, PSMC5, PSMD7 and HSPA8/HSC70. Interacts (via B30.2/SPRY domain) with HSPA1A/B. Interacts with PSMC2, MAP3K7/TAK1, TAB2 and TAB3. Interacts with SQSTM1. Interacts with TRIM6 and TRIM34. Interacts with ULK1 (phosphorylated form), GABARAP, GABARAPL1, GABARAPL2, MAP1LC3A, MAP1LC3C and BECN1. Post-translationally, degraded in a proteasome-independent fashion in the absence of viral infection but in a proteasome-dependent fashion following exposure to restriction sensitive virus. In terms of processing, autoubiquitinated in a RING finger- and UBE2D2-dependent manner. Monoubiquitinated by TRIM21. Deubiquitinated by Yersinia YopJ. Ubiquitination may not lead to proteasomal degradation.

Its subcellular location is the cytoplasm. It is found in the nucleus. It catalyses the reaction S-ubiquitinyl-[E2 ubiquitin-conjugating enzyme]-L-cysteine + [acceptor protein]-L-lysine = [E2 ubiquitin-conjugating enzyme]-L-cysteine + N(6)-ubiquitinyl-[acceptor protein]-L-lysine.. The protein operates within protein modification; protein ubiquitination. Its function is as follows. Capsid-specific restriction factor that prevents infection from non-host-adapted retroviruses. Blocks viral replication early in the life cycle, after viral entry but before reverse transcription. In addition to acting as a capsid-specific restriction factor, also acts as a pattern recognition receptor that activates innate immune signaling in response to the retroviral capsid lattice. Binding to the viral capsid triggers its E3 ubiquitin ligase activity, and in concert with the heterodimeric ubiquitin conjugating enzyme complex UBE2V1-UBE2N (also known as UBC13-UEV1A complex) generates 'Lys-63'-linked polyubiquitin chains, which in turn are catalysts in the autophosphorylation of the MAP3K7/TAK1 complex (includes TAK1, TAB2, and TAB3). Activation of the MAP3K7/TAK1 complex by autophosphorylation results in the induction and expression of NF-kappa-B and MAPK-responsive inflammatory genes, thereby leading to an innate immune response in the infected cell. Plays a role in regulating autophagy through activation of autophagy regulator BECN1 by causing its dissociation from its inhibitors BCL2 and TAB2. The sequence is that of Tripartite motif-containing protein 5 (TRIM5) from Saguinus labiatus (Red-chested mustached tamarin).